The sequence spans 101 residues: NADH-quinone oxidoreductase subunit K (101 aa).

3 helical membrane passes run 4 to 24, 30 to 50, and 61 to 81; these read LAHFLVLGAILFAISIVGIFL, IVLLMAIELMLLAVNINFVAF, and VFVFFILTVAAAESAIGLAIL.

This sequence belongs to the complex I subunit 4L family. In terms of assembly, NDH-1 is composed of 14 different subunits. Subunits NuoA, H, J, K, L, M, N constitute the membrane sector of the complex.

The protein localises to the cell inner membrane. The enzyme catalyses a quinone + NADH + 5 H(+)(in) = a quinol + NAD(+) + 4 H(+)(out). Functionally, NDH-1 shuttles electrons from NADH, via FMN and iron-sulfur (Fe-S) centers, to quinones in the respiratory chain. The immediate electron acceptor for the enzyme in this species is believed to be ubiquinone. Couples the redox reaction to proton translocation (for every two electrons transferred, four hydrogen ions are translocated across the cytoplasmic membrane), and thus conserves the redox energy in a proton gradient. The polypeptide is NADH-quinone oxidoreductase subunit K (Cupriavidus necator (strain ATCC 17699 / DSM 428 / KCTC 22496 / NCIMB 10442 / H16 / Stanier 337) (Ralstonia eutropha)).